We begin with the raw amino-acid sequence, 293 residues long: 4-hydroxy-tetrahydrodipicolinate synthase (293 aa).

A pyruvate-binding site is contributed by Thr-51. Residue Tyr-140 is the Proton donor/acceptor of the active site. Residue Lys-168 is the Schiff-base intermediate with substrate of the active site. Ile-209 is a pyruvate binding site.

The protein belongs to the DapA family. Homotetramer; dimer of dimers.

It localises to the cytoplasm. It carries out the reaction L-aspartate 4-semialdehyde + pyruvate = (2S,4S)-4-hydroxy-2,3,4,5-tetrahydrodipicolinate + H2O + H(+). It functions in the pathway amino-acid biosynthesis; L-lysine biosynthesis via DAP pathway; (S)-tetrahydrodipicolinate from L-aspartate: step 3/4. Its function is as follows. Catalyzes the condensation of (S)-aspartate-beta-semialdehyde [(S)-ASA] and pyruvate to 4-hydroxy-tetrahydrodipicolinate (HTPA). The sequence is that of 4-hydroxy-tetrahydrodipicolinate synthase from Streptococcus mutans serotype c (strain ATCC 700610 / UA159).